Consider the following 349-residue polypeptide: Phenylalanine--tRNA ligase alpha subunit (349 aa).

Glutamate 258 is a Mg(2+) binding site.

It belongs to the class-II aminoacyl-tRNA synthetase family. Phe-tRNA synthetase alpha subunit type 1 subfamily. In terms of assembly, tetramer of two alpha and two beta subunits. Requires Mg(2+) as cofactor.

Its subcellular location is the cytoplasm. The catalysed reaction is tRNA(Phe) + L-phenylalanine + ATP = L-phenylalanyl-tRNA(Phe) + AMP + diphosphate + H(+). This Rickettsia canadensis (strain McKiel) protein is Phenylalanine--tRNA ligase alpha subunit.